The primary structure comprises 297 residues: Chelated iron transport system membrane protein YfeD (297 aa).

Helical transmembrane passes span 20-40, 58-78, 96-116, 133-153, 172-192, 197-217, 224-244, and 248-268; these read AIVAAIVTGVVCAILSCYLVL, IVLAFWLGIPLVIGAFVSGIF, TVMGIVFSGMFAFGLVLFSRI, ISLTELKQTLWIAGFTLLVVL, IGLPVKFLHYGLLCLLALTIV, AVGVILVIAMLIAPGIIAFMI, MLVVATLVSVVACVLGTLISF, and GATGPCIVIIQALFFVVALIY.

The protein belongs to the ABC-3 integral membrane protein family.

It is found in the cell inner membrane. Functionally, part of an ATP-driven transport system YfeABCD for chelated iron. In Yersinia pestis, this protein is Chelated iron transport system membrane protein YfeD (yfeD).